The primary structure comprises 32 residues: uncharacterized protein (32 aa).

This is an uncharacterized protein from Saccharomyces cerevisiae (strain ATCC 204508 / S288c) (Baker's yeast).